A 301-amino-acid polypeptide reads, in one-letter code: Transcriptional activator FeaR (301 aa).

The region spanning Gln-199 to Lys-299 is the HTH araC/xylS-type domain. 2 DNA-binding regions (H-T-H motif) span residues Glu-217–Gly-238 and Leu-266–Phe-289.

Positive regulator of tynA/maoA and feaB/padA, the genes for 2-phenylethylamine catabolism. The sequence is that of Transcriptional activator FeaR (feaR) from Escherichia coli (strain K12).